Here is a 722-residue protein sequence, read N- to C-terminus: MYRALYAFRSAEPNALAFAAGETFLVLERSSAHWWLAARARSGETGYVPPAYLRRLQGLEQDVLQAIDRAIEAVHNTAMRDGGKYSLEQRGVLQKLIHHRKETLSRRGPSASSVAVMTSSTSDHHLDAAAARQPNGVCRAGFERQHSLPSSEHLGADGGLYQIPLPSSQIPPQPRRAAPTTPPPPVKRRDREALMASGSGGHNTMPSGGNSVSSGSSVSSTSLDTLYTSSSPSEPGSSCSPTPPPVPRRGTHTTVSQVQPPPSKASAPEPPAEEEVATGTTSASDDLEALGTLSLGTTEEKAAAEAAVPRTIGAELMELVRRNTGLSHELCRVAIGIIVGHIQASVPASSPVMEQVLLSLVEGKDLSMALPSGQVCHDQQRLEVIFADLARRKDDAQQRSWALYEDEGVIRCYLEELLHILTDADPEVCKKMCKRNEFESVLALVAYYQMEHRASLRLLLLKCFGAMCSLDAAIISTLVSSVLPVELARDMQTDTQDHQKLCYSALILAMVFSMGEAVPYAHYEHLGTPFAQFLLNIVEDGLPLDTTEQLPDLCVNLLLALNLHLPAADQNVIMAALSKHANVKIFSEKLLLLLNRGDDPVRIFKHEPQPPHSVLKFLQDVFGSPATAAIFYHTDMMALIDITVRHIADLSPGDKLRMEYLSLMHAIVRTTPYLQHRHRLPDLQAILRRILNEEETSPQCQMDRMIVREMCKEFLVLGEAPS.

Positions 1–58 (MYRALYAFRSAEPNALAFAAGETFLVLERSSAHWWLAARARSGETGYVPPAYLRRLQG) constitute an SH3 domain. Disordered stretches follow at residues 101–122 (KETL…SSTS) and 149–286 (PSSE…ASDD). Positions 110–121 (SASSVAVMTSST) are enriched in low complexity. A Phosphoserine modification is found at S120. A compositionally biased stretch (pro residues) spans 169–185 (QIPPQPRRAAPTTPPPP). Positions 175 to 192 (RRAAPTTPPPPVKRRDRE) match the Nuclear localization signal motif. T181 is modified (phosphothreonine). The segment covering 206–240 (PSGGNSVSSGSSVSSTSLDTLYTSSSPSEPGSSCS) has biased composition (low complexity). The residue at position 294 (S294) is a Phosphoserine.

As to quaternary structure, associates with the intermediate filaments, vimentin and desmin. Binds the first and third SH3 domains of NCK. Binds the proline-rich domains of N-WASP through its SH3 domain. Similarly, binds diaphanous protein homolog 1 (DRF1). Binds the SH3 domains of GRB2 through its proline-rich domains. Interacts with Helicobacter pylori toxin vacA. Isoform 4 interacts with FHOD1. Interacts with FASLG. Interacts with TMIGD2. Highest expression in heart, brain, skeletal muscle, kidney and liver. Lower levels in placenta, lung, small intestine and leukocytes. Weak expression in colon, thymus and spleen.

The protein resides in the nucleus. Its function is as follows. Has an important role in stress fiber formation induced by active diaphanous protein homolog 1 (DRF1). Induces microspike formation, in vivo. In vitro, stimulates N-WASP-induced ARP2/3 complex activation in the absence of CDC42. May play an important role in the maintenance of sarcomeres and/or in the assembly of myofibrils into sarcomeres. Implicated in regulation of actin polymerization and cell adhesion. Plays a role in angiogenesis. The protein is NCK-interacting protein with SH3 domain (NCKIPSD) of Homo sapiens (Human).